Reading from the N-terminus, the 91-residue chain is Cell division topological specificity factor (91 aa).

It belongs to the MinE family.

Functionally, prevents the cell division inhibition by proteins MinC and MinD at internal division sites while permitting inhibition at polar sites. This ensures cell division at the proper site by restricting the formation of a division septum at the midpoint of the long axis of the cell. This is Cell division topological specificity factor from Gloeobacter violaceus (strain ATCC 29082 / PCC 7421).